Consider the following 496-residue polypeptide: N-succinylglutamate 5-semialdehyde dehydrogenase (496 aa).

Residue 229–234 (GSYATG) coordinates NAD(+). Active-site residues include Glu-252 and Cys-286.

Belongs to the aldehyde dehydrogenase family. AstD subfamily.

The enzyme catalyses N-succinyl-L-glutamate 5-semialdehyde + NAD(+) + H2O = N-succinyl-L-glutamate + NADH + 2 H(+). It participates in amino-acid degradation; L-arginine degradation via AST pathway; L-glutamate and succinate from L-arginine: step 4/5. Catalyzes the NAD-dependent reduction of succinylglutamate semialdehyde into succinylglutamate. This Legionella pneumophila subsp. pneumophila (strain Philadelphia 1 / ATCC 33152 / DSM 7513) protein is N-succinylglutamate 5-semialdehyde dehydrogenase.